The primary structure comprises 372 residues: UDP-N-acetylglucosamine--N-acetylmuramyl-(pentapeptide) pyrophosphoryl-undecaprenol N-acetylglucosamine transferase (372 aa).

Residues 14–16, Asn128, Arg169, Ser201, Ile257, and Gln302 contribute to the UDP-N-acetyl-alpha-D-glucosamine site; that span reads TGG.

The protein belongs to the glycosyltransferase 28 family. MurG subfamily.

The protein resides in the cell inner membrane. It carries out the reaction di-trans,octa-cis-undecaprenyl diphospho-N-acetyl-alpha-D-muramoyl-L-alanyl-D-glutamyl-meso-2,6-diaminopimeloyl-D-alanyl-D-alanine + UDP-N-acetyl-alpha-D-glucosamine = di-trans,octa-cis-undecaprenyl diphospho-[N-acetyl-alpha-D-glucosaminyl-(1-&gt;4)]-N-acetyl-alpha-D-muramoyl-L-alanyl-D-glutamyl-meso-2,6-diaminopimeloyl-D-alanyl-D-alanine + UDP + H(+). Its pathway is cell wall biogenesis; peptidoglycan biosynthesis. Functionally, cell wall formation. Catalyzes the transfer of a GlcNAc subunit on undecaprenyl-pyrophosphoryl-MurNAc-pentapeptide (lipid intermediate I) to form undecaprenyl-pyrophosphoryl-MurNAc-(pentapeptide)GlcNAc (lipid intermediate II). This Bacteroides thetaiotaomicron (strain ATCC 29148 / DSM 2079 / JCM 5827 / CCUG 10774 / NCTC 10582 / VPI-5482 / E50) protein is UDP-N-acetylglucosamine--N-acetylmuramyl-(pentapeptide) pyrophosphoryl-undecaprenol N-acetylglucosamine transferase.